Here is a 271-residue protein sequence, read N- to C-terminus: Chymotrypsin-like elastase family member 2A (271 aa).

The signal sequence occupies residues 1–16 (MIRTLLLSALVAGALS). Positions 17 to 30 (CGYPTYEVQHDVSR) are cleaved as a propeptide — activation peptide. One can recognise a Peptidase S1 domain in the interval 31 to 269 (VVGGQEASPN…YIDWINSVIA (239 aa)). C60 and C76 are disulfide-bonded. Catalysis depends on charge relay system residues H75 and D123. 3 disulfide bridges follow: C157/C224, C188/C204, and C214/C245. The Charge relay system role is filled by S218.

It belongs to the peptidase S1 family. Elastase subfamily. Interacts with CPA1. Interacts with SERPINA1. As to expression, pancreas.

Its subcellular location is the secreted. The enzyme catalyses Preferential cleavage: Leu-|-Xaa, Met-|-Xaa and Phe-|-Xaa. Hydrolyzes elastin.. In terms of biological role, elastase that enhances insulin signaling and might have a physiologic role in cellular glucose metabolism. Circulates in plasma and reduces platelet hyperactivation, triggers both insulin secretion and degradation, and increases insulin sensitivity. In Rattus norvegicus (Rat), this protein is Chymotrypsin-like elastase family member 2A (Cela2a).